The primary structure comprises 416 residues: Trehalose synthase (416 aa).

Belongs to the glycosyltransferase group 1 family. Glycosyltransferase 4 subfamily. Homodimer. The cofactor is Mg(2+).

The enzyme catalyses an NDP-alpha-D-glucose + D-glucose = alpha,alpha-trehalose + a ribonucleoside 5'-diphosphate + H(+). Its activity is regulated as follows. Inhibited by 20 mM Fe(3+) and Mn(2+). Partially inhibited by Zn(2+) and Ni(2+). Activity is slightly enhanced by 2 mM Fe (3+), Mn (2+), Ca(2+) or Li(+) and by 20 mM Mg(2+), Ca(2+) or Li(+). Functionally, synthesizes trehalose from ADP-glucose and glucose. The reaction is reversible, the equilibrium strongly favors trehalose synthesis. The protein is Trehalose synthase of Rubrobacter xylanophilus (strain DSM 9941 / JCM 11954 / NBRC 16129 / PRD-1).